The sequence spans 748 residues: EF-hand domain-containing family member C2 (748 aa).

DM10 domains follow at residues 75–182 (DKQV…VKMG), 226–366 (DRQV…RSKY), and 428–535 (VSNV…EQHA). EF-hand domains follow at residues 556–591 (EQQK…LDVE) and 631–666 (EKFS…FRLP).

Its subcellular location is the cytoplasm. It is found in the cytoskeleton. The protein resides in the cilium axoneme. Its function is as follows. Microtubule inner protein (MIP) part of the dynein-decorated doublet microtubules (DMTs) in cilia axoneme, which is required for motile cilia beating. In Danio rerio (Zebrafish), this protein is EF-hand domain-containing family member C2 (efhc2).